The chain runs to 297 residues: 4-hydroxy-tetrahydrodipicolinate synthase (297 aa).

A pyruvate-binding site is contributed by Thr45. Catalysis depends on Tyr133, which acts as the Proton donor/acceptor. The active-site Schiff-base intermediate with substrate is Lys161. Ile205 is a pyruvate binding site.

This sequence belongs to the DapA family. In terms of assembly, homotetramer; dimer of dimers.

It is found in the cytoplasm. It catalyses the reaction L-aspartate 4-semialdehyde + pyruvate = (2S,4S)-4-hydroxy-2,3,4,5-tetrahydrodipicolinate + H2O + H(+). Its pathway is amino-acid biosynthesis; L-lysine biosynthesis via DAP pathway; (S)-tetrahydrodipicolinate from L-aspartate: step 3/4. In terms of biological role, catalyzes the condensation of (S)-aspartate-beta-semialdehyde [(S)-ASA] and pyruvate to 4-hydroxy-tetrahydrodipicolinate (HTPA). The chain is 4-hydroxy-tetrahydrodipicolinate synthase from Dichelobacter nodosus (strain VCS1703A).